Here is a 126-residue protein sequence, read N- to C-terminus: Small ribosomal subunit protein uS8 (126 aa).

The protein belongs to the universal ribosomal protein uS8 family. Part of the 30S ribosomal subunit. Contacts proteins S5 and S12.

In terms of biological role, one of the primary rRNA binding proteins, it binds directly to 16S rRNA central domain where it helps coordinate assembly of the platform of the 30S subunit. The polypeptide is Small ribosomal subunit protein uS8 (Lawsonia intracellularis (strain PHE/MN1-00)).